Reading from the N-terminus, the 429-residue chain is 4-hydroxy-3-methylbut-2-en-1-yl diphosphate synthase (flavodoxin) (429 aa).

The [4Fe-4S] cluster site is built by cysteine 323, cysteine 326, cysteine 369, and glutamate 376.

It belongs to the IspG family. Requires [4Fe-4S] cluster as cofactor.

It catalyses the reaction (2E)-4-hydroxy-3-methylbut-2-enyl diphosphate + oxidized [flavodoxin] + H2O + 2 H(+) = 2-C-methyl-D-erythritol 2,4-cyclic diphosphate + reduced [flavodoxin]. It participates in isoprenoid biosynthesis; isopentenyl diphosphate biosynthesis via DXP pathway; isopentenyl diphosphate from 1-deoxy-D-xylulose 5-phosphate: step 5/6. Converts 2C-methyl-D-erythritol 2,4-cyclodiphosphate (ME-2,4cPP) into 1-hydroxy-2-methyl-2-(E)-butenyl 4-diphosphate. This is 4-hydroxy-3-methylbut-2-en-1-yl diphosphate synthase (flavodoxin) from Wolbachia sp. subsp. Brugia malayi (strain TRS).